The chain runs to 432 residues: UDP-glucosyltransferase B1 (432 aa).

The protein belongs to the UDP-glycosyltransferase family.

It catalyses the reaction (9Z)-17-hydroxyoctadec-9-enoate 17-O-beta-D-glucoside + UDP-alpha-D-glucose = (9Z)-17-hydroxyoctadec-9-enoate 17-O-sophoroside + UDP + H(+). Functionally, catalyzes the second glycosylation step of sophorolipid biosynthesis, the further glucosylation of the previoulsy formed glucolipid to give rise to an acidic sophorolipid. The chain is UDP-glucosyltransferase B1 from Starmerella bombicola (Yeast).